A 255-amino-acid chain; its full sequence is Small ribosomal subunit protein eS1 (255 aa).

Over residues M1 to K18 the composition is skewed to basic residues. Residues M1–V20 are disordered. Residue A2 is modified to N-acetylalanine; partial.

It belongs to the eukaryotic ribosomal protein eS1 family. As to quaternary structure, component of the small ribosomal subunit. Mature ribosomes consist of a small (40S) and a large (60S) subunit. The 40S subunit contains about 33 different proteins and 1 molecule of RNA (18S). The 60S subunit contains about 49 different proteins and 3 molecules of RNA (25S, 5.8S and 5S).

It is found in the cytoplasm. The chain is Small ribosomal subunit protein eS1 from Coccidioides immitis (strain RS) (Valley fever fungus).